The following is a 411-amino-acid chain: Squalene synthase (411 aa).

2 consecutive transmembrane segments (helical) span residues 281-301 (SIFR…AMCY) and 388-408 (SPVL…QLSG).

The protein belongs to the phytoene/squalene synthase family. Mg(2+) serves as cofactor.

It localises to the endoplasmic reticulum membrane. The catalysed reaction is 2 (2E,6E)-farnesyl diphosphate + NADPH + H(+) = squalene + 2 diphosphate + NADP(+). It catalyses the reaction 2 (2E,6E)-farnesyl diphosphate + NADH + H(+) = squalene + 2 diphosphate + NAD(+). Its pathway is terpene metabolism; lanosterol biosynthesis; lanosterol from farnesyl diphosphate: step 1/3. The chain is Squalene synthase from Nicotiana benthamiana.